We begin with the raw amino-acid sequence, 185 residues long: Ribosome-recycling factor (185 aa).

Belongs to the RRF family.

The protein resides in the cytoplasm. In terms of biological role, responsible for the release of ribosomes from messenger RNA at the termination of protein biosynthesis. May increase the efficiency of translation by recycling ribosomes from one round of translation to another. This Aliivibrio salmonicida (strain LFI1238) (Vibrio salmonicida (strain LFI1238)) protein is Ribosome-recycling factor.